The following is a 720-amino-acid chain: Connector enhancer of kinase suppressor of ras 1 (720 aa).

One can recognise an SAM domain in the interval 7–70; it reads WTPGKVATWL…LGGVEQLQAL (64 aa). A CRIC domain is found at 78 to 164; it reads NLQSLTEGLL…QVLHEDGPAA (87 aa). Positions 196 to 285 constitute a PDZ domain; it reads KAVLEQVQLD…GLSLVLKKIP (90 aa). Residues 285-390 form a disordered region; that stretch reads PIPETPPQTP…RKKSKGLATR (106 aa). Positions 304 to 317 are enriched in low complexity; that stretch reads RSPSLSLAPLSPRA. A phosphoserine mark is found at Ser307 and Ser314. Residues 348–359 are compositionally biased toward pro residues; that stretch reads EPLPIPPEPPAI. Residues 379-390 are compositionally biased toward basic residues; that stretch reads VGRKKSKGLATR. The 100-residue stretch at 403–502 folds into the PH domain; it reads RPDCDGWLLL…WVRHLITCIS (100 aa). Residues 504–573 are disordered; sequence YQSPGRAPPP…TSFGSLTDSS (70 aa). The span at 518–530 shows a compositional bias: acidic residues; that stretch reads CYSETEAEDPDDE. A compositionally biased stretch (low complexity) spans 533 to 546; sequence SHSASPSPAQAGSP. The segment covering 553-571 has biased composition (polar residues); sequence PAATPTQRSPRTSFGSLTD. Residues 615–646 adopt a coiled-coil conformation; sequence QLNERVHRVRALQSTLKAKLQELQVLEEVLGD. The segment at 676-720 is disordered; that stretch reads QAEGSSHILTSDSTEQSPHSLPSDPEEHSHLCPLTSESSLRPPDL. Polar residues predominate over residues 678–695; the sequence is EGSSHILTSDSTEQSPHS.

This sequence belongs to the CNKSR family. In terms of assembly, interacts with RHO and RALGDS. Phosphorylated on tyrosine.

Its subcellular location is the cytoplasm. The protein localises to the membrane. Functionally, may function as an adapter protein or regulator of Ras signaling pathways. The polypeptide is Connector enhancer of kinase suppressor of ras 1 (CNKSR1) (Homo sapiens (Human)).